Reading from the N-terminus, the 460-residue chain is Argininosuccinate lyase (460 aa).

The protein belongs to the lyase 1 family. Argininosuccinate lyase subfamily.

The protein resides in the cytoplasm. It carries out the reaction 2-(N(omega)-L-arginino)succinate = fumarate + L-arginine. Its pathway is amino-acid biosynthesis; L-arginine biosynthesis; L-arginine from L-ornithine and carbamoyl phosphate: step 3/3. The sequence is that of Argininosuccinate lyase from Pelotomaculum thermopropionicum (strain DSM 13744 / JCM 10971 / SI).